Reading from the N-terminus, the 580-residue chain is Negative elongation factor B (580 aa).

Lys-519 is modified (N6-acetyllysine). Positions Asp-552–Leu-580 are disordered. At Ser-557 the chain carries Phosphoserine.

The protein belongs to the NELF-B family. In terms of assembly, the NELF complex is composed of NELFA, NELFB, NELFCD and NELFE; the N-terminus of NELFB binds to the NELFA:NELFCD subcomplex. Binds RNA which may help to stabilize the NELF complex on nucleic acid Interacts with the first BRCT repeat of BRCA1. Interacts with KIAA1191. Isoform 1 and isoform 2 interact with NELFA, NELFCD and NELFE. Isoform 1 is expressed in the kidney, liver, adipose and lung. Isoform 2 is widely expressed.

It localises to the nucleus. Its function is as follows. Essential component of the NELF complex, a complex that negatively regulates the elongation of transcription by RNA polymerase II (Pol II). The NELF complex, which acts via an association with the DSIF complex and causes transcriptional pausing, is counteracted by the P-TEFb kinase complex. May be able to induce chromatin unfolding. Essential for early embryogenesis; plays an important role in maintaining the undifferentiated state of embryonic stem cells (ESCs) by preventing unscheduled expression of developmental genes. Plays a key role in establishing the responsiveness of stem cells to developmental cues; facilitates plasticity and cell fate commitment in ESCs by establishing the appropriate expression level of signaling molecules. Supports the transcription of genes involved in energy metabolism in cardiomyocytes; facilitates the association of transcription initiation factors with the promoters of the metabolism-related genes. In Mus musculus (Mouse), this protein is Negative elongation factor B (Nelfb).